Here is a 216-residue protein sequence, read N- to C-terminus: MAASPRNSVLLAFALLCLPWPQEVGAFPAMPLSSLFANAVLRAQHLHQLAADTYKEFERAYIPEGQRYSIQNAQAAFCFSETIPAPTGKDEAQQRSDVELLRFSLLLIQSWLGPVQFLSRVFTNSLVFGTSDRVYEKLKDLEEGIQALMRELEDGSPRAGQILKQTYDKFDTNLRSDDALLKNYGLLSCFKKDLHKAETYLRVMKCRRFVESSCAF.

An N-terminal signal peptide occupies residues 1 to 26; sequence MAASPRNSVLLAFALLCLPWPQEVGA. His45 contacts Zn(2+). Cys78 and Cys189 are disulfide-bonded. Ser131 carries the post-translational modification Phosphoserine. A Zn(2+)-binding site is contributed by Glu198. A disulfide bridge connects residues Cys206 and Cys214.

The protein belongs to the somatotropin/prolactin family.

The protein localises to the secreted. In terms of biological role, plays an important role in growth control. Its major role in stimulating body growth is to stimulate the liver and other tissues to secrete IGF1. It stimulates both the differentiation and proliferation of myoblasts. It also stimulates amino acid uptake and protein synthesis in muscle and other tissues. In Canis lupus familiaris (Dog), this protein is Somatotropin (GH1).